Reading from the N-terminus, the 266-residue chain is Secreted RxLR effector protein 128 (266 aa).

A signal peptide spans 1–18; sequence MRGAFYTAIALLIGRSQT. Positions 48–63 match the RxLR-dEER motif; it reads RYLRDGLAHSATNEER.

The protein belongs to the RxLR effector family.

Its subcellular location is the secreted. It localises to the host nucleus. In terms of biological role, secreted effector that dos not suppress the host cell death induced by cell death-inducing proteins. The protein is Secreted RxLR effector protein 128 of Plasmopara viticola (Downy mildew of grapevine).